The sequence spans 123 residues: Iron-sulfur cluster insertion protein ErpA (123 aa).

Iron-sulfur cluster-binding residues include Cys51, Cys115, and Cys117.

It belongs to the HesB/IscA family. In terms of assembly, homodimer. Iron-sulfur cluster is required as a cofactor.

Its function is as follows. Required for insertion of 4Fe-4S clusters for at least IspG. This Halorhodospira halophila (strain DSM 244 / SL1) (Ectothiorhodospira halophila (strain DSM 244 / SL1)) protein is Iron-sulfur cluster insertion protein ErpA.